Reading from the N-terminus, the 554-residue chain is HMG box-containing protein 4 (554 aa).

Disordered stretches follow at residues 14 to 34 (RGME…KRSY), 47 to 368 (QVRK…SAYQ), and 418 to 468 (HKQN…SPAK). A compositionally biased stretch (polar residues) spans 117–127 (TSPQVDTSTTH). Positions 221–230 (TGREETESRS) are enriched in basic and acidic residues. Positions 242 to 255 (PRSGGTPDSASSTG) are enriched in polar residues. Over residues 272–300 (MKKKKKSKKSKKKKDKHKDEKHRKHSKSK) the composition is skewed to basic residues. Positions 317 to 335 (LPSPPPPTATTPTSPPSVP) are enriched in pro residues. Basic and acidic residues predominate over residues 342 to 358 (HAEEQLDKKKKKEDPEK). The HMG box DNA-binding region spans 360–428 (KKKNMSAYQV…KQNKAEATTV (69 aa)). Positions 434–466 (SSESAARSKGSSSGLPSPNKKSPTSVVSFSTSP) are enriched in low complexity.

In terms of assembly, interacts with nlk.2.

Its subcellular location is the nucleus. Its function is as follows. Negatively regulates Wnt/beta-catenin signaling during development. This is HMG box-containing protein 4 (hmgxb4) from Xenopus tropicalis (Western clawed frog).